Reading from the N-terminus, the 182-residue chain is Probable tyrosine phosphatase protein H4 (182 aa).

One can recognise a Tyrosine-protein phosphatase domain in the interval 1-182 (MEINKFICSQ…TVLKIQKSKI (182 aa)). The active-site Phosphocysteine intermediate is C142.

Belongs to the protein-tyrosine phosphatase family.

The enzyme catalyses O-phospho-L-tyrosyl-[protein] + H2O = L-tyrosyl-[protein] + phosphate. The chain is Probable tyrosine phosphatase protein H4 (H5) from Microplitis demolitor (Parasitoid wasp).